Reading from the N-terminus, the 87-residue chain is Protein anon-73B1 (87 aa).

A helical transmembrane segment spans residues 25–47 (LLIRYGLYVGALFQFVCISAAVL). The interval 52–87 (PDVNSNPETGEVTEREGEPVRTRLHKIRKLEKKKRR) is disordered. Residues 63 to 72 (VTEREGEPVR) are compositionally biased toward basic and acidic residues. Over residues 73–87 (TRLHKIRKLEKKKRR) the composition is skewed to basic residues.

Belongs to the UPF0239 family.

The protein resides in the membrane. This Drosophila erecta (Fruit fly) protein is Protein anon-73B1.